The primary structure comprises 309 residues: tRNA uridine(34) hydroxylase (309 aa).

A Rhodanese domain is found at 126-220 (SDPEVIVIDT…YLEQIPPEES (95 aa)). The active-site Cysteine persulfide intermediate is the C180.

Belongs to the TrhO family.

The catalysed reaction is uridine(34) in tRNA + AH2 + O2 = 5-hydroxyuridine(34) in tRNA + A + H2O. Functionally, catalyzes oxygen-dependent 5-hydroxyuridine (ho5U) modification at position 34 in tRNAs. The chain is tRNA uridine(34) hydroxylase from Nostoc sp. (strain PCC 7120 / SAG 25.82 / UTEX 2576).